We begin with the raw amino-acid sequence, 217 residues long: Large ribosomal subunit protein uL1A (217 aa).

Position 2 is an N-acetylserine (Ser2). Lys47 carries the N6-methyllysine; by RKM5 modification. Ser79 and Ser86 each carry phosphoserine.

This sequence belongs to the universal ribosomal protein uL1 family. As to quaternary structure, component of the large ribosomal subunit (LSU). Mature yeast ribosomes consist of a small (40S) and a large (60S) subunit. The 40S small subunit contains 1 molecule of ribosomal RNA (18S rRNA) and 33 different proteins (encoded by 57 genes). The large 60S subunit contains 3 rRNA molecules (25S, 5.8S and 5S rRNA) and 46 different proteins (encoded by 81 genes). uL1 forms part of the L1 stalk. Post-translationally, N-terminally acetylated by acetyltransferase NatA.

The protein localises to the cytoplasm. In terms of biological role, component of the ribosome, a large ribonucleoprotein complex responsible for the synthesis of proteins in the cell. The small ribosomal subunit (SSU) binds messenger RNAs (mRNAs) and translates the encoded message by selecting cognate aminoacyl-transfer RNA (tRNA) molecules. The large subunit (LSU) contains the ribosomal catalytic site termed the peptidyl transferase center (PTC), which catalyzes the formation of peptide bonds, thereby polymerizing the amino acids delivered by tRNAs into a polypeptide chain. The nascent polypeptides leave the ribosome through a tunnel in the LSU and interact with protein factors that function in enzymatic processing, targeting, and the membrane insertion of nascent chains at the exit of the ribosomal tunnel. uL1 forms part of the L1 stalk, a mobile element that plays a role in evacuating the exit-site tRNA. The chain is Large ribosomal subunit protein uL1A from Saccharomyces cerevisiae (strain ATCC 204508 / S288c) (Baker's yeast).